A 186-amino-acid polypeptide reads, in one-letter code: UPF0200 protein PF1294 (186 aa).

7-14 (GMPGSGKG) lines the ATP pocket.

The protein belongs to the UPF0200 family.

The protein is UPF0200 protein PF1294 of Pyrococcus furiosus (strain ATCC 43587 / DSM 3638 / JCM 8422 / Vc1).